Here is a 484-residue protein sequence, read N- to C-terminus: HSPB1-associated protein 1 (484 aa).

The tract at residues 1–26 (MAARPGAITNADSASGGGEEEGKHVK) is disordered. Residues 88-208 (ETACNYVEAT…EDTPFLYPTR (121 aa)) are interaction with HSPB1. The region spanning 124 to 288 (WAYADYKYFV…HQTRVEEAIT (165 aa)) is the JmjC domain. A disordered region spans residues 396–429 (TPSSEEPSSERGGIFENDGEDFVSKNGKSFGKRQ).

As to quaternary structure, interacts with CRYAB and HSPB1.

The protein resides in the cytoplasm. Functionally, may play a role in cellular stress response. This Bos taurus (Bovine) protein is HSPB1-associated protein 1 (HSPBAP1).